The primary structure comprises 93 residues: Alpha-defensin 23 (93 aa).

An N-terminal signal peptide occupies residues 1-19 (MKTLVLLSALILLAFQVQA). Residues 20-58 (DPIQNTDEETKTEEQPGKEDQAVSVSFGDPEGSSLQEES) constitute a propeptide that is removed on maturation. Residues 24 to 54 (NTDEETKTEEQPGKEDQAVSVSFGDPEGSSL) are disordered. Positions 27–40 (EETKTEEQPGKEDQ) are enriched in basic and acidic residues. 3 disulfide bridges follow: C64–C92, C66–C81, and C71–C91.

The protein belongs to the alpha-defensin family.

It localises to the secreted. Its function is as follows. May have microbicidal activities. This is Alpha-defensin 23 (Defa23) from Mus musculus (Mouse).